We begin with the raw amino-acid sequence, 101 residues long: Pollen allergen Amb a 3 (101 aa).

Residues 2-101 form the Phytocyanin domain; that stretch reads KVYLVGGPEL…QKFVACVPGR (100 aa). Asn-41 carries N-linked (GlcNAc...) asparagine glycosylation. Residues Cys-61 and Cys-88 are joined by a disulfide bond. O-linked (Hex) serine glycosylation occurs at Ser-84. Cys-97 carries the cysteine derivative modification. At Arg-101 the chain carries Blocked carboxyl end (Arg).

In terms of processing, the identity of the saccharide is not reported. The sugar attached to Ser-84 is represented simply as Hex. Cys-97 sulfhydryl group is modified but does not form an interchain disulfide bond.

The polypeptide is Pollen allergen Amb a 3 (Ambrosia artemisiifolia var. elatior (Short ragweed)).